The following is a 315-amino-acid chain: ATP synthase gamma chain (315 aa).

Belongs to the ATPase gamma chain family. In terms of assembly, F-type ATPases have 2 components, CF(1) - the catalytic core - and CF(0) - the membrane proton channel. CF(1) has five subunits: alpha(3), beta(3), gamma(1), delta(1), epsilon(1). CF(0) has three main subunits: a, b and c.

Its subcellular location is the cellular thylakoid membrane. In terms of biological role, produces ATP from ADP in the presence of a proton gradient across the membrane. The gamma chain is believed to be important in regulating ATPase activity and the flow of protons through the CF(0) complex. This chain is ATP synthase gamma chain, found in Trichormus variabilis (strain ATCC 29413 / PCC 7937) (Anabaena variabilis).